A 290-amino-acid chain; its full sequence is Nucleotide-binding protein XF_1405 (290 aa).

13-20 (GLSGSGKS) is a binding site for ATP. 65–68 (DIRS) is a GTP binding site.

It belongs to the RapZ-like family.

In terms of biological role, displays ATPase and GTPase activities. In Xylella fastidiosa (strain 9a5c), this protein is Nucleotide-binding protein XF_1405.